We begin with the raw amino-acid sequence, 114 residues long: U17-barytoxin-Tl1a (114 aa).

Residues 1-20 form the signal peptide; the sequence is MKTIIVFLSLLVLATKFGDA. Residues 21–74 constitute a propeptide that is removed on maturation; it reads NEGVNQEQMKEVIQNEFREDFLNEMAAMSLLQQLEAIESTLLEKEADRNSRQKR. 3 disulfides stabilise this stretch: Cys75–Cys88, Cys82–Cys93, and Cys87–Cys108.

The protein belongs to the neurotoxin 14 (magi-1) family. 03 (ICK-30-40) subfamily. Expressed by the venom gland.

Its subcellular location is the secreted. Ion channel inhibitor. In Trittame loki (Brush-footed trapdoor spider), this protein is U17-barytoxin-Tl1a.